A 549-amino-acid polypeptide reads, in one-letter code: Mitochondrial hydroperoxide bicyclase CYP50918A1 (549 aa).

The tract at residues 1 to 75 (MPDAFDVSDD…PQGNRKPAVL (75 aa)) is disordered. The span at 8–26 (SDDKQLVDQQLTRDSDSKP) shows a compositional bias: basic and acidic residues. Low complexity predominate over residues 27 to 41 (AAKPASKQKPPSKVP). Cysteine 491 contributes to the heme binding site. A disordered region spans residues 528-549 (DTGDHGPPNGKFSVIKPRQPKH).

This sequence belongs to the cytochrome P450 family. It depends on heme as a cofactor.

It localises to the mitochondrion. The enzyme catalyses (13S)-hydroperoxy-(9Z,11E,15Z)-octadecatrienoate = plasmodiophorol A. It catalyses the reaction (13S)-hydroperoxy-(9Z,11E,15Z)-octadecatrienoate = plasmodiophorol B. It participates in lipid metabolism; oxylipin biosynthesis. In terms of biological role, cytochrome P450 hydroperoxide bicyclase involved in the metabolism of oxylipins natural products such as egregiachlorides, hybridalactone, ecklonialactones and related bicyclic oxylipins. Isomerizes the hydroperoxides into epoxyalcohols via epoxyallylic radical. Can use alpha-linolenic 13-hydroperoxide ((9Z,11E,13S,15Z)-13-hydroperoxy-9,11,15-octadecatrienoic, 13-HPOT) as preferred substrate to produce the heterobicyclic oxylipins plasmodiophorol A (6-oxabicyclo[3.1.0]hexane) and plasmodiophorol B (2-oxabicyclo[2.2.1]heptane) at the ratio 12:1 and a minor product plasmodiophorol C (cyclopentanediol) formed through the hydrolysis of plasmodiophorols A and B and, to a lower extent, active with linoleic acid 13-hydroperoxide ((9Z,11E,13S)-13-hydroperoxy-9,11-octadecadienoic, 13-HPOD), linoleic acid 9-hydroperoxide ((9S,10E,12Z)-9-hydroperoxy-10,12-octadecadienoic, 9-HPOD) and alpha-linolenic 9-hydroperoxide ((9S,10E,12Z,15Z)-9-hydroperoxy-10,12,15-octadecatrienoic, 9-HPOT). The polypeptide is Mitochondrial hydroperoxide bicyclase CYP50918A1 (Plasmodiophora brassicae (Clubroot disease agent)).